Consider the following 966-residue polypeptide: C4 phosphoenolpyruvate carboxylase (966 aa).

Ser11 bears the Phosphoserine mark. The active site involves His172. Residues Trp283, Arg450, and Asp597 each coordinate D-glucose 6-phosphate. Lys600 is a catalytic residue. A D-glucose 6-phosphate-binding site is contributed by Arg635. The active site involves Arg641. Arg641 is an L-aspartate binding site. Thr665 lines the D-glucose 6-phosphate pocket. Residue Gln673 coordinates L-aspartate. D-glucose 6-phosphate contacts are provided by residues Arg753 and 767-769 (RAI). Positions 829, 888, and 964 each coordinate L-aspartate.

Belongs to the PEPCase type 1 family. In terms of assembly, homotetramer. Requires Mg(2+) as cofactor. As to expression, expressed in mesophyll cells, but not in bundle-sheath, roots, stems and flowers.

It is found in the cytoplasm. The catalysed reaction is oxaloacetate + phosphate = phosphoenolpyruvate + hydrogencarbonate. It functions in the pathway photosynthesis; C4 acid pathway. With respect to regulation, 5 fold activation by the allosteric regulator glucose-6-phosphate. Low sensitivity to inhibition by L-malate and L-aspartate. Up-regulated by light-reversible phosphorylation. Forms oxaloacetate through the carboxylation of phosphoenolpyruvate (PEP). Catalyzes the first step of C4 photosynthesis. The sequence is that of C4 phosphoenolpyruvate carboxylase from Flaveria trinervia (Clustered yellowtops).